The primary structure comprises 451 residues: MDQETIDTDYDVIVLGTGITECILSGLLSVDGKKVLHIDKQDHYGGEAASVTLSQLYEKFKQNPISKEERESKFGKDRDWNVDLIPKFLMANGELTNILIHTDVTRYVDFKQVSGSYVFKQGKIYKVPANEIEAISSPLMGIFEKRRMKKFLEWISSYKEDDLSTHQGLDLDKNTMDEVYYKFGLGNSTKEFIGHAMALWTNDDYLQQPARPSFERILLYCQSVARYGKSPYLYPMYGLGELPQGFARLSAIYGGTYMLDTPIDEVLYKKDTGKFEGVKTKLGTFKAPLVIADPTYFPEKCKSTGQRVIRAICILNHPVPNTSNADSLQIIIPQSQLGRKSDIYVAIVSDAHNVCSKGHYLAIISTIIETDKPHIELEPAFKLLGPIEEKFMGIAELFEPREDGSKDNIYLSRSYDASSHFESMTDDVKDIYFRVTGHPLVLKQRQEQEKQ.

Interaction with YPT1 regions lie at residues 106–112 (RYVDFKQ) and 234–259 (YPMY…TYML).

The protein belongs to the Rab GDI family. As to quaternary structure, interacts with the GDP-bound form of Rab GTPase YPT1. Interacts with YPT10.

The protein localises to the cytoplasm. Functionally, regulates the GDP/GTP exchange reaction of SEC4 by inhibiting the dissociation of GDP from it, and the subsequent binding of GTP to SEC4. Plays an essential role in the yeast secretory pathway. Extracts GDP-bound YPT7 from vacuolar membranes, antagonizing vacuolar membrane fusion. This Saccharomyces cerevisiae (strain ATCC 204508 / S288c) (Baker's yeast) protein is Rab GDP-dissociation inhibitor (GDI1).